A 383-amino-acid polypeptide reads, in one-letter code: Meiotic recombination protein SPO11-2 (383 aa).

In terms of domain architecture, Topo IIA-type catalytic spans 24 to 167 (LLPHEARARI…LGIMASSRGL (144 aa)). Catalysis depends on tyrosine 124, which acts as the O-(5'-phospho-DNA)-tyrosine intermediate. Positions 217 and 270 each coordinate Mg(2+).

Belongs to the TOP6A family. In terms of assembly, heterotetramer of 2 SPO11 (SPO11-1 and/or SPO11-2) and 2 MTOPVIB chains. Interacts with MTOPVIB. May form a heterodimer with SPO11-1. Interacts with PRD1. Does not interact with TOP6B. Mg(2+) serves as cofactor. Very low expression in flowers and shoots.

Its subcellular location is the nucleus. It carries out the reaction ATP-dependent breakage, passage and rejoining of double-stranded DNA.. Component of a topoisomerase 6 complex specifically required for meiotic recombination. Together with MTOPVIB, mediates DNA cleavage that forms the double-strand breaks (DSB) that initiate meiotic recombination. The complex promotes relaxation of negative and positive supercoiled DNA and DNA decatenation through cleavage and ligation cycles. The sequence is that of Meiotic recombination protein SPO11-2 (SPO11-2) from Arabidopsis thaliana (Mouse-ear cress).